Here is a 122-residue protein sequence, read N- to C-terminus: Phosphoribosyl-ATP pyrophosphatase (122 aa).

This sequence belongs to the PRA-PH family.

The protein resides in the cytoplasm. The enzyme catalyses 1-(5-phospho-beta-D-ribosyl)-ATP + H2O = 1-(5-phospho-beta-D-ribosyl)-5'-AMP + diphosphate + H(+). Its pathway is amino-acid biosynthesis; L-histidine biosynthesis; L-histidine from 5-phospho-alpha-D-ribose 1-diphosphate: step 2/9. This chain is Phosphoribosyl-ATP pyrophosphatase, found in Burkholderia thailandensis (strain ATCC 700388 / DSM 13276 / CCUG 48851 / CIP 106301 / E264).